The following is a 289-amino-acid chain: 3-methyl-2-oxobutanoate hydroxymethyltransferase (289 aa).

Residues 1 to 15 (MSTTFQLDTSTSRAN) are compositionally biased toward polar residues. Positions 1–20 (MSTTFQLDTSTSRANPTPAP) are disordered. Mg(2+)-binding residues include aspartate 67 and aspartate 106. 3-methyl-2-oxobutanoate contacts are provided by residues 67-68 (DS), aspartate 106, and lysine 136. Glutamate 138 is a binding site for Mg(2+). Glutamate 205 (proton acceptor) is an active-site residue.

This sequence belongs to the PanB family. As to quaternary structure, homodecamer; pentamer of dimers. Mg(2+) is required as a cofactor.

The protein resides in the cytoplasm. The enzyme catalyses 3-methyl-2-oxobutanoate + (6R)-5,10-methylene-5,6,7,8-tetrahydrofolate + H2O = 2-dehydropantoate + (6S)-5,6,7,8-tetrahydrofolate. The protein operates within cofactor biosynthesis; (R)-pantothenate biosynthesis; (R)-pantoate from 3-methyl-2-oxobutanoate: step 1/2. In terms of biological role, catalyzes the reversible reaction in which hydroxymethyl group from 5,10-methylenetetrahydrofolate is transferred onto alpha-ketoisovalerate to form ketopantoate. In Novosphingobium aromaticivorans (strain ATCC 700278 / DSM 12444 / CCUG 56034 / CIP 105152 / NBRC 16084 / F199), this protein is 3-methyl-2-oxobutanoate hydroxymethyltransferase.